The following is a 306-amino-acid chain: Pantothenate kinase (306 aa).

Residue 91–98 (GSVAVGKS) coordinates ATP.

The protein belongs to the prokaryotic pantothenate kinase family.

It is found in the cytoplasm. The catalysed reaction is (R)-pantothenate + ATP = (R)-4'-phosphopantothenate + ADP + H(+). Its pathway is cofactor biosynthesis; coenzyme A biosynthesis; CoA from (R)-pantothenate: step 1/5. This is Pantothenate kinase from Streptococcus equi subsp. equi (strain 4047).